Here is a 155-residue protein sequence, read N- to C-terminus: Altered inheritance rate of mitochondria protein 29 (155 aa).

At Ser78 the chain carries Phosphoserine.

This sequence belongs to the UPF0538 family.

The protein resides in the cytoplasm. Its function is as follows. May be involved in mitochondrial organization and biogenesis. The polypeptide is Altered inheritance rate of mitochondria protein 29 (AIM29) (Saccharomyces cerevisiae (strain ATCC 204508 / S288c) (Baker's yeast)).